Reading from the N-terminus, the 693-residue chain is Elongation factor G (693 aa).

Residues 8-283 (PQQRNIGIMA…AVVEYLPSPV (276 aa)) enclose the tr-type G domain. Residues 17-24 (AHIDAGKT), 81-85 (DTPGH), and 135-138 (NKMD) each bind GTP.

The protein belongs to the TRAFAC class translation factor GTPase superfamily. Classic translation factor GTPase family. EF-G/EF-2 subfamily.

The protein localises to the cytoplasm. In terms of biological role, catalyzes the GTP-dependent ribosomal translocation step during translation elongation. During this step, the ribosome changes from the pre-translocational (PRE) to the post-translocational (POST) state as the newly formed A-site-bound peptidyl-tRNA and P-site-bound deacylated tRNA move to the P and E sites, respectively. Catalyzes the coordinated movement of the two tRNA molecules, the mRNA and conformational changes in the ribosome. This chain is Elongation factor G, found in Oleidesulfovibrio alaskensis (strain ATCC BAA-1058 / DSM 17464 / G20) (Desulfovibrio alaskensis).